Here is an 852-residue protein sequence, read N- to C-terminus: Vacuolar protein sorting-associated protein 16 homolog (852 aa).

This sequence belongs to the VPS16 family. As to quaternary structure, probable core component of at least two putative endosomal tethering complexes, the homotypic fusion and vacuole protein sorting (HOPS) complex and the class C core vacuole/endosome tethering (CORVET) complex. Their common core is composed of the class C Vps proteins vps-11, vps-16 and vps-18, which in HOPS further associates with vps-33.1, vps-39 and vps-41 and in CORVET with vps-8 and vps-33.2.

It is found in the late endosome membrane. Its subcellular location is the lysosome membrane. Its function is as follows. Plays a role in vesicle-mediated protein trafficking to lysosomal compartments including the endocytic membrane transport pathways. Believed to act as a core component of the putative HOPS and CORVET endosomal tethering complexes which are proposed to be involved in the rab-5-to-rab-7 endosome conversion probably implicating sand-1, and via binding SNAREs and SNARE complexes to mediate tethering and docking events during SNARE-mediated membrane fusion. The HOPS complex is proposed to be recruited to rab-7 on the late endosomal membrane and to regulate late endocytic, phagocytic and autophagic traffic towards lysosomes. Within the HOPS complex, contributes to the normal development of gut granules in the adult intestine. The CORVET complex is proposed to function as a rab-5 effector to mediate early endosome fusion probably in specific endosome subpopulations. Required for recruitment of vps-33.1 to the HOPS complex. Required for fusion of endosomes and autophagosomes with lysosomes; the function is dependent on its association with vps-33.1 but not vps-33.2. This chain is Vacuolar protein sorting-associated protein 16 homolog, found in Caenorhabditis elegans.